A 383-amino-acid chain; its full sequence is MKQAFNQRISSALNQRKQAGLNRSRRVVSQGNQATLVVDGKSYLNFSGNDYLGLASSKELMEAWQEGLSLYGSGSGASPLVTGYSKPHANLESQLAEWLGLDCAILFNSGFSANQAVLFSLLEKGDTLLQDKLNHASLMEAGMLSPAVMKRFKHNDVDHLKSLLKRSSDEPTLVVTEGVFSMDGDLSPLADIAKLTKENDAWLMVDDAHGCGVLGTNGKGCCDVYSITPDILIVTFGKGFGLSGAAVLCNQECGDYLSQFARHHVYSTAMPPAQAHALSHALLMIQQQEWRRDKLKELNQQFESELMNFLGAEKTPTPIKPIIIGEATDAMILADSLKERGLWTTAIRPPTVPVGSARIRVTLSANHSSADISALTQAINELG.

Residue Arg23 participates in substrate binding. A pyridoxal 5'-phosphate-binding site is contributed by 110–111; that stretch reads GF. His135 serves as a coordination point for substrate. Residues Ser181, His209, and Thr235 each coordinate pyridoxal 5'-phosphate. Lys238 is modified (N6-(pyridoxal phosphate)lysine). A substrate-binding site is contributed by Thr351.

This sequence belongs to the class-II pyridoxal-phosphate-dependent aminotransferase family. BioF subfamily. In terms of assembly, homodimer. Pyridoxal 5'-phosphate is required as a cofactor.

The enzyme catalyses 6-carboxyhexanoyl-[ACP] + L-alanine + H(+) = (8S)-8-amino-7-oxononanoate + holo-[ACP] + CO2. Its pathway is cofactor biosynthesis; biotin biosynthesis. Catalyzes the decarboxylative condensation of pimeloyl-[acyl-carrier protein] and L-alanine to produce 8-amino-7-oxononanoate (AON), [acyl-carrier protein], and carbon dioxide. This Aliivibrio fischeri (strain ATCC 700601 / ES114) (Vibrio fischeri) protein is 8-amino-7-oxononanoate synthase.